We begin with the raw amino-acid sequence, 241 residues long: Xyloglucan-specific endo-beta-1,4-glucanase A (241 aa).

An N-terminal signal peptide occupies residues methionine 1–alanine 16. A glycan (N-linked (GlcNAc...) asparagine) is linked at asparagine 47.

It belongs to the glycosyl hydrolase 12 (cellulase H) family.

The protein localises to the secreted. The enzyme catalyses xyloglucan + H2O = xyloglucan oligosaccharides.. Functionally, catalyzes endohydrolysis of 1,4-beta-D-glucosidic linkages in xyloglucan with retention of the beta-configuration of the glycosyl residues. Specific for xyloglucan and does not hydrolyze other cell wall components. The polypeptide is Xyloglucan-specific endo-beta-1,4-glucanase A (xgeA) (Aspergillus niger).